A 568-amino-acid polypeptide reads, in one-letter code: MTSFREFAETCQAIEKISSTIETTNKVADLLKKVDVEELPVATHFIMSEVFPAWSGEQLGIGTSLLYVSLSKASGMSIHSIESLVRTTGDIGDTALLILKEKRKNQVTFSSFFEEKPELSITEVYRRFKIASEASGKGSQDIKVKNLQFLFTSSSPREAKYISRLALEELRIGVGEGVVRDAIAKAFSVPAEIVEHSFMVTNDLGIVAAAAKKGGVEALERLGIEINRPIKMMLSQISPDIDADIRAMKEVAIEWKFDGARVQIHKDGNSVTLFSRKLENVTSSLPDLVEIVRKHVKAESAILDGEAVAVDENGVPRAFQEILKRFRRKYDVREKALGIPIQLNFFDIMYINGKTLIDLPLLERRKALESCVESSVEDSKSISVAEQVITGDLELVEKIYREALKAGHEGVMVKNPNSVYSPGKRGKNWLKKKPLMDTLDLVIVGAEWGFGRRANLIGSYTVACYDPDTTRFLQVGKVGTGLTDDQLKELTEILSGLMEGGEAGGVFAIRPKVVLEIAFEEIQKSPNYDSGFALRFPRFIRIRDDKDPEEADTIQRIGRVYSQQLKRL.

E254 contacts ATP. Catalysis depends on K256, which acts as the N6-AMP-lysine intermediate. ATP-binding residues include R261, R276, E306, F346, R425, and K431.

Belongs to the ATP-dependent DNA ligase family. Requires Mg(2+) as cofactor.

It catalyses the reaction ATP + (deoxyribonucleotide)n-3'-hydroxyl + 5'-phospho-(deoxyribonucleotide)m = (deoxyribonucleotide)n+m + AMP + diphosphate.. DNA ligase that seals nicks in double-stranded DNA during DNA replication, DNA recombination and DNA repair. This Methanosarcina mazei (strain ATCC BAA-159 / DSM 3647 / Goe1 / Go1 / JCM 11833 / OCM 88) (Methanosarcina frisia) protein is DNA ligase 2.